The following is a 331-amino-acid chain: Phosphoribosylformylglycinamidine cyclo-ligase (331 aa).

The protein belongs to the AIR synthase family.

The protein resides in the cytoplasm. The enzyme catalyses 2-formamido-N(1)-(5-O-phospho-beta-D-ribosyl)acetamidine + ATP = 5-amino-1-(5-phospho-beta-D-ribosyl)imidazole + ADP + phosphate + H(+). It functions in the pathway purine metabolism; IMP biosynthesis via de novo pathway; 5-amino-1-(5-phospho-D-ribosyl)imidazole from N(2)-formyl-N(1)-(5-phospho-D-ribosyl)glycinamide: step 2/2. The chain is Phosphoribosylformylglycinamidine cyclo-ligase from Clostridium botulinum (strain Okra / Type B1).